Here is a 1401-residue protein sequence, read N- to C-terminus: MAP kinase kinase kinase wis4 (1401 aa).

2 disordered regions span residues 67 to 99 (HIPL…MSYT) and 176 to 205 (QDSI…NDFS). 2 stretches are compositionally biased toward polar residues: residues 72–99 (PSHS…MSYT) and 176–191 (QDSI…NQSL). The region spanning 1037-1306 (WQQGHFVRSG…AVDLLTHPWI (270 aa)) is the Protein kinase domain. ATP contacts are provided by residues 1043–1051 (VRSGMFGDV) and Lys-1066. Asp-1161 functions as the Proton acceptor in the catalytic mechanism.

It belongs to the protein kinase superfamily. STE Ser/Thr protein kinase family. MAP kinase kinase kinase subfamily.

It catalyses the reaction L-seryl-[protein] + ATP = O-phospho-L-seryl-[protein] + ADP + H(+). The catalysed reaction is L-threonyl-[protein] + ATP = O-phospho-L-threonyl-[protein] + ADP + H(+). Its function is as follows. Involved in a signal transduction pathway that is activated in under conditions of heat shock, oxidative stress or limited nutrition. Unlike win1, it is not activated by changes in the osmolarity of the extracellular environment. Activates the wis1 MAP kinase kinase by phosphorylation. This chain is MAP kinase kinase kinase wis4 (wis4), found in Schizosaccharomyces pombe (strain 972 / ATCC 24843) (Fission yeast).